Consider the following 993-residue polypeptide: UPF0182 protein MAP_3291c (993 aa).

Helical transmembrane passes span 18–38 (ILIL…RLID), 63–83 (FVVF…GLAV), 113–133 (LVSV…AQSY), 175–195 (FVAV…FGGI), 210–230 (IQLV…YWLD), 254–274 (AVLP…AAVF), and 287–307 (IGLV…PLIV). Residues 903–941 (NIQPTEGGAPAASPPANAPAPAVTPGSAPPVAAPPVPDG) are disordered. The span at 929–939 (SAPPVAAPPVP) shows a compositional bias: pro residues.

This sequence belongs to the UPF0182 family.

Its subcellular location is the cell membrane. The polypeptide is UPF0182 protein MAP_3291c (Mycolicibacterium paratuberculosis (strain ATCC BAA-968 / K-10) (Mycobacterium paratuberculosis)).